We begin with the raw amino-acid sequence, 371 residues long: Carnitine monooxygenase oxygenase subunit (371 aa).

The 109-residue stretch at 44–152 (WICVAHGSEL…VEEYAGFVFI (109 aa)) folds into the Rieske domain. [2Fe-2S] cluster is bound by residues C86, H88, C106, and H109. Residues H208, H213, and D323 each contribute to the Fe cation site.

This sequence belongs to the bacterial ring-hydroxylating dioxygenase alpha subunit family. CntA subfamily. As to quaternary structure, composed of an oxygenase subunit and a reductase subunit. It depends on [2Fe-2S] cluster as a cofactor. Fe cation is required as a cofactor.

It carries out the reaction (R)-carnitine + NADH + O2 + H(+) = (3R)-3-hydroxy-4-oxobutanoate + trimethylamine + NAD(+) + H2O. The enzyme catalyses (R)-carnitine + NADPH + O2 + H(+) = (3R)-3-hydroxy-4-oxobutanoate + trimethylamine + NADP(+) + H2O. The protein operates within amine and polyamine metabolism; carnitine metabolism. Its activity is regulated as follows. Inhibited by EDTA. Its function is as follows. Converts carnitine to trimethylamine and malic semialdehyde. Acts on both enantiomers. This chain is Carnitine monooxygenase oxygenase subunit, found in Acinetobacter pittii (strain PHEA-2).